We begin with the raw amino-acid sequence, 251 residues long: Octanoyltransferase (251 aa).

One can recognise a BPL/LPL catalytic domain in the interval 56-241 (ADTGDEIWVV…NLDGASAAAD (186 aa)). Residues 96–103 (RGGQITYH), 168–170 (ALG), and 181–183 (GLS) each bind substrate. Cys199 serves as the catalytic Acyl-thioester intermediate.

Belongs to the LipB family.

The protein localises to the cytoplasm. The catalysed reaction is octanoyl-[ACP] + L-lysyl-[protein] = N(6)-octanoyl-L-lysyl-[protein] + holo-[ACP] + H(+). The protein operates within protein modification; protein lipoylation via endogenous pathway; protein N(6)-(lipoyl)lysine from octanoyl-[acyl-carrier-protein]: step 1/2. Its function is as follows. Catalyzes the transfer of endogenously produced octanoic acid from octanoyl-acyl-carrier-protein onto the lipoyl domains of lipoate-dependent enzymes. Lipoyl-ACP can also act as a substrate although octanoyl-ACP is likely to be the physiological substrate. This is Octanoyltransferase from Burkholderia cenocepacia (strain HI2424).